Here is a 243-residue protein sequence, read N- to C-terminus: Tubulin-folding cofactor B (243 aa).

In terms of domain architecture, CAP-Gly spans 181 to 223; sequence RAESLGPGYWVGIQYDEPLGKHDGMVKGTRFFECPRLQGGMVR.

The protein belongs to the TBCB family. Supercomplex made of cofactors A to E. Cofactors A and D function by capturing and stabilizing tubulin in a quasi-native conformation. Cofactor E binds to the cofactor D-tubulin complex; interaction with cofactor C then causes the release of tubulin polypeptides that are committed to the native state. Interacts with TUBA6. In terms of tissue distribution, expressed in roots, stems, leaves, flowers and siliques.

The protein resides in the cytoplasm. In terms of biological role, involved in control of cell division. Regulates probably the availability of alpha-tubulin for dimerization of alpha-/beta-tubulin, which is required for proper microtubule biogenesis. Decreased expression of TFCB results in enlarged mesophyll cells and leaf epidermal cells with bulged nuclei, increased ploidy and increased numbers of spindles and phragmoplasts. The protein is Tubulin-folding cofactor B (TFCB) of Arabidopsis thaliana (Mouse-ear cress).